The primary structure comprises 798 residues: Protocadherin beta-10 (798 aa).

Positions 1-26 (MAVRELCFSRQRQVLFLFLFWGVSLA) are cleaved as a signal peptide. At 27–690 (GSGFGRYSVT…AQADLLTVYL (664 aa)) the chain is on the extracellular side. 5 Cadherin domains span residues 35-133 (VTEE…APVF), 138-242 (TVLK…APQF), 247-347 (YETQ…PPEL), 352-451 (FSNS…APAF), and 456-561 (YTLF…SPFV). An N-linked (GlcNAc...) asparagine glycan is attached at Asn-169. Asn-418 and Asn-436 each carry an N-linked (GlcNAc...) asparagine glycan. The N-linked (GlcNAc...) asparagine glycan is linked to Asn-567. Residues 568-671 (GSAPCTELVP…LVDGFSQPYL (104 aa)) form the Cadherin 6 domain. Residues 691 to 711 (VVALASVSSLFLFSVLLFVAV) form a helical membrane-spanning segment. Topologically, residues 712–798 (RLCRRSRAAS…FRNSFGFNIQ (87 aa)) are cytoplasmic.

Its subcellular location is the cell membrane. Potential calcium-dependent cell-adhesion protein. May be involved in the establishment and maintenance of specific neuronal connections in the brain. This Pan troglodytes (Chimpanzee) protein is Protocadherin beta-10 (PCDHB10).